Reading from the N-terminus, the 683-residue chain is THO complex subunit 5 (683 aa).

Positions 1–42 (MSSESSKKRKPKVIRSDGAPAEGKRNRSDTEQEGKYYSEEAE) are disordered. Ser2 is modified (N-acetylserine). Positions 2 to 144 (SSESSKKRKP…YEVMHLQKEI (143 aa)) are interaction with CSF1R. The interval 2–199 (SSESSKKRKP…RLDWELEQRK (198 aa)) is interaction with THOC7. Ser5 and Ser6 each carry phosphoserine. The short motif at 7–10 (KKRK) is the Nuclear localization signal element. Positions 22-42 (EGKRNRSDTEQEGKYYSEEAE) are enriched in basic and acidic residues. Residues 81-247 (AIEIEERRIQ…QASLPVQEYL (167 aa)) are a coiled coil. Residue Lys153 forms a Glycyl lysine isopeptide (Lys-Gly) (interchain with G-Cter in SUMO2) linkage. A Phosphotyrosine; by SRC modification is found at Tyr225. Residues 247–683 (LFMPFDQAHK…NHPQGFFSHR (437 aa)) are tandem RWD domains. The disordered stretch occupies residues 301-336 (FKPPEDSQDDESDSDAEEEQTTKRRRPTLGVQLDDK). Residues 306–319 (DSQDDESDSDAEEE) are compositionally biased toward acidic residues. 3 positions are modified to phosphoserine: Ser307, Ser312, and Ser314. Thr328 bears the Phosphothreonine mark.

This sequence belongs to the THOC5 family. As to quaternary structure, component of the THO subcomplex, which is composed of THOC1, THOC2, THOC3, THOC5, THOC6 and THOC7. The THO subcomplex interacts with DDX39B to form the THO-DDX39B complex which multimerizes into a 28-subunit tetrameric assembly. Component of the transcription/export (TREX) complex at least composed of ALYREF/THOC4, DDX39B, SARNP/CIP29, CHTOP and the THO subcomplex; in the complex interacts with THOC1, THOC2, THOC5, THOC6 and THOC7; forms a coiled-coil dimer with THOC7; together with THOC6 and THOC7, plays a key structural role in oligomerization of the THO-DDX39B complex. TREX seems to have a dynamic structure involving ATP-dependent remodeling. Interacts with phosphorylated CSF1R. Interacts (via N-terminus) with the NTF2 domain of NXF1. Forms a complex with CEBPB. Interacts with CPSF6; indicative for an association with the cleavage factor Im (CFIm) complex. Interacts with LUZP4. Interacts with NCBP3. Post-translationally, phosphorylated on tyrosine upon binding to activated CSF1R; which causes a dissociation of the two proteins. Phosphorylation on Ser-5 and/or Ser-6 is required for nuclear export. Phosphorylated on Thr-328 in insulin-stimulated adipocytes. Phosphorylation at Tyr-225 modulates mRNA binding. In terms of tissue distribution, ubiquitously expressed.

It localises to the nucleus. The protein localises to the cytoplasm. Its function is as follows. Component of the THO subcomplex of the TREX complex which is thought to couple mRNA transcription, processing and nuclear export, and which specifically associates with spliced mRNA and not with unspliced pre-mRNA. Plays a key structural role in the oligomerization of the THO-DDX39B complex. TREX is recruited to spliced mRNAs by a transcription-independent mechanism, binds to mRNA upstream of the exon-junction complex (EJC) and is recruited in a splicing- and cap-dependent manner to a region near the 5' end of the mRNA where it functions in mRNA export to the cytoplasm via the TAP/NXF1 pathway. THOC5 in conjunction with ALYREF/THOC4 functions in NXF1-NXT1 mediated nuclear export of HSP70 mRNA; both proteins enhance the RNA binding activity of NXF1 and are required for NXF1 localization to the nuclear rim. Involved in transcription elongation and genome stability. Involved in alternative polyadenylation site choice by recruiting CPSF6 to 5' region of target genes; probably mediates association of the TREX and CFIm complexes. Functionally, regulates the expression of myeloid transcription factors CEBPA, CEBPB and GAB2 by enhancing the levels of phosphatidylinositol 3,4,5-trisphosphate. May be involved in the differentiation of granulocytes and adipocytes. Essential for hematopoietic primitive cell survival and plays an integral role in monocytic development. (Microbial infection) The TREX complex is essential for the export of Kaposi's sarcoma-associated herpesvirus (KSHV) intronless mRNAs and infectious virus production. The chain is THO complex subunit 5 (THOC5) from Homo sapiens (Human).